A 333-amino-acid polypeptide reads, in one-letter code: Glycerol-3-phosphate dehydrogenase [NAD(P)+] (333 aa).

The NADPH site is built by Ser13, Tyr14, Arg34, and Lys108. Residues Lys108, Gly137, and Thr139 each contribute to the sn-glycerol 3-phosphate site. Ala141 serves as a coordination point for NADPH. The sn-glycerol 3-phosphate site is built by Lys193, Asp246, Ser256, Arg257, and Asn258. Lys193 acts as the Proton acceptor in catalysis. Residue Arg257 coordinates NADPH. Glu283 provides a ligand contact to NADPH.

Belongs to the NAD-dependent glycerol-3-phosphate dehydrogenase family.

It is found in the cytoplasm. The enzyme catalyses sn-glycerol 3-phosphate + NAD(+) = dihydroxyacetone phosphate + NADH + H(+). It catalyses the reaction sn-glycerol 3-phosphate + NADP(+) = dihydroxyacetone phosphate + NADPH + H(+). The protein operates within membrane lipid metabolism; glycerophospholipid metabolism. Its function is as follows. Catalyzes the reduction of the glycolytic intermediate dihydroxyacetone phosphate (DHAP) to sn-glycerol 3-phosphate (G3P), the key precursor for phospholipid synthesis. The protein is Glycerol-3-phosphate dehydrogenase [NAD(P)+] of Idiomarina loihiensis (strain ATCC BAA-735 / DSM 15497 / L2-TR).